Reading from the N-terminus, the 259-residue chain is 3-hydroxypropionyl-coenzyme A dehydratase (259 aa).

Catalysis depends on Glu113, which acts as the Nucleophile. Glu133 acts as the Proton acceptor in catalysis.

Belongs to the enoyl-CoA hydratase/isomerase family. As to quaternary structure, monomer.

The enzyme catalyses 3-hydroxypropanoyl-CoA = acryloyl-CoA + H2O. Plays a role in autotrophic carbon fixation via the 3-hydroxypropionate/4-hydroxybutyrate cycle. Catalyzes the reversible dehydration of 3-hydroxypropionyl-CoA to form acryloyl-CoA, and the reversible dehydration of (S)-3-hydroxybutyryl-CoA to form crotonyl-CoA. Inactive towards (R)-3-hydroxybutyryl-CoA. This chain is 3-hydroxypropionyl-coenzyme A dehydratase, found in Metallosphaera sedula (strain ATCC 51363 / DSM 5348 / JCM 9185 / NBRC 15509 / TH2).